Consider the following 196-residue polypeptide: Putative NADH dehydrogenase/NAD(P)H nitroreductase Smal_0358 (196 aa).

This sequence belongs to the nitroreductase family. HadB/RutE subfamily. FMN is required as a cofactor.

The polypeptide is Putative NADH dehydrogenase/NAD(P)H nitroreductase Smal_0358 (Stenotrophomonas maltophilia (strain R551-3)).